Reading from the N-terminus, the 476-residue chain is Glycogen synthase (476 aa).

K15 is a binding site for ADP-alpha-D-glucose.

This sequence belongs to the glycosyltransferase 1 family. Bacterial/plant glycogen synthase subfamily.

It catalyses the reaction [(1-&gt;4)-alpha-D-glucosyl](n) + ADP-alpha-D-glucose = [(1-&gt;4)-alpha-D-glucosyl](n+1) + ADP + H(+). The protein operates within glycan biosynthesis; glycogen biosynthesis. Synthesizes alpha-1,4-glucan chains using ADP-glucose. The sequence is that of Glycogen synthase from Yersinia enterocolitica serotype O:8 / biotype 1B (strain NCTC 13174 / 8081).